We begin with the raw amino-acid sequence, 103 residues long: Sec-independent protein translocase protein TatA (103 aa).

The helical transmembrane segment at 1–21 (MGNIFSPTHLIIILLLILLLF) threads the bilayer. The disordered stretch occupies residues 48 to 103 (EESIEDKVEMADTSQVINEESQQSQPLSVKRAAIRRKASSDSKGGKASIAKKQRVK). A compositionally biased stretch (polar residues) spans 59-74 (DTSQVINEESQQSQPL).

The protein belongs to the TatA/E family. As to quaternary structure, the Tat system comprises two distinct complexes: a TatABC complex, containing multiple copies of TatA, TatB and TatC subunits, and a separate TatA complex, containing only TatA subunits. Substrates initially bind to the TatABC complex, which probably triggers association of the separate TatA complex to form the active translocon.

The protein localises to the cell inner membrane. In terms of biological role, part of the twin-arginine translocation (Tat) system that transports large folded proteins containing a characteristic twin-arginine motif in their signal peptide across membranes. TatA could form the protein-conducting channel of the Tat system. In Bartonella tribocorum (strain CIP 105476 / IBS 506), this protein is Sec-independent protein translocase protein TatA.